The sequence spans 731 residues: Gelsolin (731 aa).

The segment at 2–125 (VVEHPEFLKA…YKKGGVASGF (124 aa)) is actin-severing. The Gelsolin-like 1 repeat unit spans residues 25 to 107 (FDLVPVPPNL…VQGFESATFL (83 aa)). Tyr35 is subject to Phosphotyrosine. Gly41, Asp42, Glu73, Asp85, Gly90, and Ala92 together coordinate Ca(2+). The segment at 72–75 (DESG) is actin-actin interfilament contact point. 111 to 118 (KSGLKYKK) serves as a coordination point for a 1,2-diacyl-sn-glycero-3-phospho-(1D-myo-inositol-4,5-bisphosphate). Val121 provides a ligand contact to Ca(2+). A 1,2-diacyl-sn-glycero-3-phospho-(1D-myo-inositol-4,5-bisphosphate) is bound at residue 137-145 (RLLQVKGRR). The Gelsolin-like 2 repeat unit spans residues 147–219 (VRATEVPVSW…FEEGAEPEAM (73 aa)). Residues Gly162 and Asp163 each contribute to the Ca(2+) site. Cys164 and Cys177 are disulfide-bonded. Ca(2+) is bound by residues Glu185, Asp235, Glu278, Asp279, and Glu303. One copy of the Gelsolin-like 3 repeat lies at 266 to 338 (DENPFAQGAL…LPEGGETPLF (73 aa)). A phosphotyrosine mark is found at Tyr358 and Tyr414. Positions 383–731 (AAQHGMDDDG…LDRALAELAA (349 aa)) are actin-binding, Ca-sensitive. Residues 404-485 (SNKVPVDPAT…VQGKEPAHLM (82 aa)) form a Gelsolin-like 4 repeat. Residues Gly420, Asp421, Glu451, Asp463, Gly468, Pro470, and Thr500 each contribute to the Ca(2+) site. Position 533 is an N6-acetyllysine (Lys533). The stretch at 533–591 (KAGALNSNDAFVLKTPSAAYLWVGAGASEAEKTGAQELLRVLRAQPVQVAEGSEPDSFW) is one Gelsolin-like 5 repeat. Ca(2+)-binding residues include Asn540 and Asp541. Position 552 is a phosphotyrosine (Tyr552). Glu563 serves as a coordination point for Ca(2+). Residue Tyr600 is modified to Phosphotyrosine. Residues 630 to 705 (IEEVPGEFMQ…VKQGFEPPSF (76 aa)) form a Gelsolin-like 6 repeat. Residues Asp645, Asp646, and Glu668 each contribute to the Ca(2+) site. Thr691 carries the post-translational modification Phosphothreonine.

This sequence belongs to the villin/gelsolin family. As to quaternary structure, binds to actin and to fibronectin. Identified in a complex composed of ACTA1, COBL, GSN and TMSB4X. Interacts with the inactive form of EIF2AK2/PKR. Interacts with FLII.

Its subcellular location is the cytoplasm. The protein localises to the cytoskeleton. Calcium-regulated, actin-modulating protein that binds to the plus (or barbed) ends of actin monomers or filaments, preventing monomer exchange (end-blocking or capping). It can promote the assembly of monomers into filaments (nucleation) as well as sever filaments already formed. Plays a role in ciliogenesis. This chain is Gelsolin (GSN), found in Equus caballus (Horse).